The primary structure comprises 273 residues: MTDLPPLRDVVNRHGLYATKALGQNFLFDEQLLDRIARVPGKLKGENVLEVGPGPGGLTRALLRAGAKVTAIEMDKRCLPALAELADAFPGQLTVIEGDATKIAPETLFDGPWHVAANLPYNVGTQLFTGWLSGQDWPPQWKSLTLMFQLEVAERIVAQPGTDAYGRLAVLAQWRATPRIATRVHRSAFTPPPKVMSAIIHVEPAAMPEGVSARMLERVTEAAFGQRRKMLRQSLKGLPGALDALETLGIDPQRRAETLSVEDFVAIARLLTK.

Asparagine 25, leucine 27, glycine 52, glutamate 73, aspartate 99, and asparagine 118 together coordinate S-adenosyl-L-methionine.

Belongs to the class I-like SAM-binding methyltransferase superfamily. rRNA adenine N(6)-methyltransferase family. RsmA subfamily.

The protein localises to the cytoplasm. The enzyme catalyses adenosine(1518)/adenosine(1519) in 16S rRNA + 4 S-adenosyl-L-methionine = N(6)-dimethyladenosine(1518)/N(6)-dimethyladenosine(1519) in 16S rRNA + 4 S-adenosyl-L-homocysteine + 4 H(+). Functionally, specifically dimethylates two adjacent adenosines (A1518 and A1519) in the loop of a conserved hairpin near the 3'-end of 16S rRNA in the 30S particle. May play a critical role in biogenesis of 30S subunits. This is Ribosomal RNA small subunit methyltransferase A from Novosphingobium aromaticivorans (strain ATCC 700278 / DSM 12444 / CCUG 56034 / CIP 105152 / NBRC 16084 / F199).